Consider the following 624-residue polypeptide: Phosphatidylinositol 4-kinase lsb6 (624 aa).

Positions 1 to 31 (MESTFHSDTLDSFPNYQENSLNTNEEQTNPL) are enriched in polar residues. A disordered region spans residues 1–53 (MESTFHSDTLDSFPNYQENSLNTNEEQTNPLESLRDGWASSNSSSSSSLLLPD). Residues 40-51 (SSNSSSSSSLLL) are compositionally biased toward low complexity. The region spanning 145 to 520 (GVFPVLISKG…LLELPNLYVV (376 aa)) is the PI3K/PI4K catalytic domain. The G-loop stretch occupies residues 151–157 (ISKGSSG). The catalytic loop stretch occupies residues 346 to 354 (RNTDRNLDN). The interval 409-429 (AIDNSLAFPYKHPDSWRSFPY) is activation loop.

Belongs to the PI3/PI4-kinase family. It depends on Mg(2+) as a cofactor. The cofactor is Mn(2+).

It localises to the cell membrane. Its subcellular location is the vacuole membrane. It is found in the golgi apparatus membrane. The enzyme catalyses a 1,2-diacyl-sn-glycero-3-phospho-(1D-myo-inositol) + ATP = a 1,2-diacyl-sn-glycero-3-phospho-(1D-myo-inositol 4-phosphate) + ADP + H(+). In terms of biological role, may play a role in endocytic and/or exocytic pathways. The chain is Phosphatidylinositol 4-kinase lsb6 (lsb6) from Schizosaccharomyces pombe (strain 972 / ATCC 24843) (Fission yeast).